The primary structure comprises 629 residues: MFYQENFDVIVVGGGHAGTEAALAAARMGQKTLLLTHNIDTLGQMSCNPAIGGIGKGHLVKEVDALGGLMAKATDKGGIQFRTLNSSKGPAVRATRAQADRALYKAAVREVLENQPNLMLFQQAVDDLIVENDRVIGVVTEMGLKFRATSVVLTVGTFLGGKIHIGLENYSGGRAGDPPSIALASRLRELPFRVDRLKTGTPPRIDARTVDFSRLQAQHGDNPIPTFSFMGKTSDHPRQIPCYITYTNEKTHDVIRNNLDRSPMYSGVIEGIGPRYCPSIEDKVMRFADKNSHQIFIEPEGLTTHELYPNGISTSLPFDVQIQIVRSMDGFENAAIMRPGYAIEYDFFDPRDLKQTFETKFIDGLFFAGQINGTTGYEEAAAQGLLAGMNAALQSQGKEGWCPRRDQAYMGVLIDDLSTMGTKEPYRMFTSRAEYRLLLREDNADLRLTEIGREFGLVDDDRWARFNQKVENIEQERQRLKDIWINPNSDHVDEINKILKTPIAREANGEDLLRRPEITYKLLTQLEDFSPAHIDTQASEQVEIQVKYQGYIDRQKDEVEKSLRHETTKLPFDLEYSIVKGLSNEVIAKLTDAKPETIGMASRISGITPAAISLLLVYLKKHGMLKKGE.

Residues 13 to 18 (GGGHAG), V125, and S180 each bind FAD. 273-287 (GPRYCPSIEDKVMRF) serves as a coordination point for NAD(+). Q370 contacts FAD.

This sequence belongs to the MnmG family. Homodimer. Heterotetramer of two MnmE and two MnmG subunits. The cofactor is FAD.

It is found in the cytoplasm. Functionally, NAD-binding protein involved in the addition of a carboxymethylaminomethyl (cmnm) group at the wobble position (U34) of certain tRNAs, forming tRNA-cmnm(5)s(2)U34. This chain is tRNA uridine 5-carboxymethylaminomethyl modification enzyme MnmG, found in Photobacterium profundum (strain SS9).